Consider the following 355-residue polypeptide: D-alanine--D-alanine ligase (355 aa).

The region spanning 143 to 350 (KTIFSNLKIP…IEQLVAKLVD (208 aa)) is the ATP-grasp domain. ATP is bound at residue 178 to 233 (IKKLNFPVFVKPSNSGSSLGISKVINKSALLKALEKAWEIDARILVEEGLETREIE). Mg(2+)-binding residues include Asp303, Glu317, and Asn319.

The protein belongs to the D-alanine--D-alanine ligase family. Mg(2+) serves as cofactor. It depends on Mn(2+) as a cofactor.

Its subcellular location is the cytoplasm. The catalysed reaction is 2 D-alanine + ATP = D-alanyl-D-alanine + ADP + phosphate + H(+). It participates in cell wall biogenesis; peptidoglycan biosynthesis. Cell wall formation. In Prochlorococcus marinus (strain MIT 9312), this protein is D-alanine--D-alanine ligase.